We begin with the raw amino-acid sequence, 135 residues long: Rheacalcin-1 (135 aa).

Disulfide bonds link Cys6–Cys17, Cys34–Cys131, and Cys106–Cys123. One can recognise a C-type lectin domain in the interval 13 to 132; that stretch reads FRGNCYGYFR…CSERNAFICK (120 aa).

Its subcellular location is the secreted. The protein localises to the extracellular space. The protein resides in the extracellular matrix. This chain is Rheacalcin-1, found in Rhea americana (Greater rhea).